Reading from the N-terminus, the 1050-residue chain is uncharacterized protein (1050 aa).

Topologically, residues 1–83 are cytoplasmic; sequence MARLLTKSSQ…AVKLGTFEGC (83 aa). Phosphoserine occurs at positions 9 and 60. Position 64 is a phosphothreonine (threonine 64). The helical transmembrane segment at 84–104 threads the bilayer; it reads FIPTTLNVLSILLYLRFPWII. Residues 105–112 are Extracellular-facing; it reads GEAGVLKT. A helical transmembrane segment spans residues 113-133; it reads LLMLFISYAVGIFTSLSISAI. Residues 134–146 lie on the Cytoplasmic side of the membrane; the sequence is CTNGMVRGGGAYY. A helical membrane pass occupies residues 147 to 169; sequence AVSRSIGPELGGSIGLIFYVGQI. The Extracellular portion of the chain corresponds to 170–202; the sequence is LNTGMNISGFVEPIISIFGKESGTISQFLPEGY. The N-linked (GlcNAc...) asparagine glycan is linked to asparagine 175. Residues 203–223 form a helical membrane-spanning segment; sequence WWVFLYTTCVLAMCCILCCLG. The Cytoplasmic segment spans residues 224–232; that stretch reads SAIFAKASN. The helical transmembrane segment at 233-253 threads the bilayer; that stretch reads ALFVVIILSTISIPISSIFVH. Topologically, residues 254 to 295 are extracellular; it reads PFKDPSLLVHFTGLKWSTLMKNLASAYTENEKGTGYESFKST. Phosphoserine is present on serine 270. Threonine 271 is modified (phosphothreonine). The chain crosses the membrane as a helical span at residues 296–316; sequence FGVFFPATAGLLAGASMSGDL. Residues 317-334 lie on the Cytoplasmic side of the membrane; it reads KAPSRSIPKGTISSQATT. A helical membrane pass occupies residues 335 to 355; the sequence is FLLYLLVILCVGASVTRTGLL. Residues 356 to 368 are Extracellular-facing; that stretch reads LDMDVMEHISLHP. The helical transmembrane segment at 369 to 389 threads the bilayer; sequence LFIISGILSSGAFSSFMGIFG. Residues 390 to 417 lie on the Cytoplasmic side of the membrane; sequence AAKLLQAIARDDLIPGMFFFAKGSSYDD. The chain crosses the membrane as a helical span at residues 418–438; the sequence is IPYVAIGVTYLITQISLFWDI. Residues 439–442 are Extracellular-facing; sequence NMLS. A helical transmembrane segment spans residues 443–463; that stretch reads SMITMTFLLTFGFINLSCFLL. Residues 464–480 lie on the Cytoplasmic side of the membrane; it reads RISSTPNFRPTFRYFNR. The helical transmembrane segment at 481-497 threads the bilayer; sequence RTTLVGTILSFGVMFYV. Residues 498 to 499 are Extracellular-facing; sequence DR. Residues 500 to 520 traverse the membrane as a helical segment; that stretch reads LNAFISFLIAGILVVVIYFTC. Topologically, residues 521 to 1050 are cytoplasmic; that stretch reads PPKNWGDVSQ…SKSLTITTAL (530 aa). A Phosphoserine modification is found at serine 901. The segment at 915 to 943 is disordered; sequence ETESSFGNRSLSPKQENRRTYSDSTIESS. Residues 916 to 928 show a composition bias toward polar residues; that stretch reads TESSFGNRSLSPK. Serine 936 carries the phosphoserine modification. Threonine 939 bears the Phosphothreonine mark.

Belongs to the SLC12A transporter family.

It localises to the membrane. This is an uncharacterized protein from Schizosaccharomyces pombe (strain 972 / ATCC 24843) (Fission yeast).